A 566-amino-acid chain; its full sequence is Transcription factor atf1 (566 aa).

A compositionally biased stretch (polar residues) spans 1–42; it reads MSPSPVNTSTEPASVAAVSNGNATASSTQVPENNQSDSFAPP. Disordered stretches follow at residues 1–83, 96–117, 315–345, and 357–479; these read MSPS…FVGS, SFGSTASVGQGNPSLNRNPSLS, QQQTFPDSIRPSFTQNTNPQAVTGTMNPQAS, and SQQF…KSFL. Residues 43 to 53 show a composition bias toward low complexity; sequence SNNSQQNQQSS. 2 stretches are compositionally biased toward polar residues: residues 65-76 and 97-106; these read ANANPADQSDGV and FGSTASVGQG. A compositionally biased stretch (low complexity) spans 107 to 117; that stretch reads NPSLNRNPSLS. 2 stretches are compositionally biased toward polar residues: residues 379 to 412 and 421 to 460; these read TLRQTTDFSGQNAENGSTNLPQKTSNSDMPTANS and TDYSTSQEPSSNANNQSSPTSSINGKASSESANGTSYSKG. The span at 466 to 479 shows a compositional bias: basic and acidic residues; sequence SKNETDEEKRKSFL. The bZIP domain occupies 472 to 535; that stretch reads EEKRKSFLER…VSLKTLLIAH (64 aa). Residues 474-503 are basic motif; the sequence is KRKSFLERNRQAALKCRQRKKQWLSNLQAK. The segment at 514-528 is leucine-zipper; that stretch reads LSAQVSALREEIVSL.

This sequence belongs to the bZIP family. Heterodimer of pcr1/mts2 and atf1/mts1. In terms of processing, phosphorylated by sty1/spc1.

It localises to the nucleus. Its function is as follows. Transcription factor required for sexual development and entry into stationary phase. Binds and activates CRE sites (cAMP-response elements, also known as M26 meiotic recombination hotspots). This chain is Transcription factor atf1 (atf1), found in Schizosaccharomyces pombe (strain 972 / ATCC 24843) (Fission yeast).